A 367-amino-acid polypeptide reads, in one-letter code: Cyclic AMP-responsive element-binding protein 3-like protein 4 (367 aa).

The segment at 1-52 (MELGCPELLEPPEDIFSTGSFLELGFNGPPSKVPGLQKSESDDFLNLFIDPN) is required for transcriptional activation. The Cytoplasmic segment spans residues 1 to 267 (MELGCPELLE…QTSSRAAQTS (267 aa)). The segment at 58–81 (ETSPGSDSGVSEDPGSPAPQAPSS) is disordered. A bZIP domain is found at 189–252 (ILKKIRRKIR…ISLVAQVHQL (64 aa)). Residues 191 to 230 (KKIRRKIRNKQSAQDSRRRKKEYIDGLESRVAACSEQNQK) form a basic motif region. Residues 231–252 (LQRKVQELERQNISLVAQVHQL) form a leucine-zipper region. The helical; Signal-anchor for type II membrane protein transmembrane segment at 268–288 (TCVLILLFSLALIILPSFSPF) threads the bilayer. Over 289-367 (QSQPEARSEG…IRGMVHADEM (79 aa)) the chain is Lumenal. Asn338 carries an N-linked (GlcNAc...) asparagine glycan.

It belongs to the bZIP family. ATF subfamily. In terms of assembly, binds DNA as a dimer. Forms a heterodimer with CREM isoform Delta. In terms of processing, controlled by regulated intramembrane proteolysis (RIP). Following ER stress a fragment containing the cytoplasmic transcription factor domain is released by proteolysis. The cleavage seems to be performed sequentially by site-1 and site-2 proteases (PS1 and PS2). PS1 cleavage may be suppressed by a determinant in the C-terminal region.

The protein resides in the endoplasmic reticulum membrane. The protein localises to the nucleus. Functionally, transcriptional activator that may play a role in the unfolded protein response. Binds to the UPR element (UPRE) but not to CRE element. Preferentially binds DNA with to the consensus sequence 5'-T[GT]ACGT[GA][GT]-3' and has transcriptional activation activity from UPRE. Binds to NF-kappa-B site and has transcriptional activation activity from NF-kappa-B-containing regulatory elements. Increases the binding of CREM isoform Delta with CRE. The CREM isoform Delta-CREB3L4 heterodimer functions through CRE but not through UPRE and may recruit HIRA to CRE to regulate histone exchange. The protein is Cyclic AMP-responsive element-binding protein 3-like protein 4 (Creb3l4) of Rattus norvegicus (Rat).